The primary structure comprises 395 residues: MSEGITDIEESQIQTNYDKVVYKFDDMELDENLLRGVFGYGFEEPSAIQQRAIMPIIEGHDVLAQAQSGTGKTGTFSIAALQRIDTSVKAPQALMLAPTRELALQIQKVVMALAFHMDIKVHACIGGTSFVEDAEGLRDAQIVVGTPGRVFDNIQRRRFRTDKIKMFILDEADEMLSSGFKEQIYQIFTLLPPTTQVVLLSATMPNDVLEVTTKFMRNPVRILVKKDELTLEGIKQFYVNVEEEEYKYECLTDLYDSISVTQAVIFCNTRRKVEELTTKLRNDKFTVSAIYSDLPQQERDTIMKEFRSGSSRILISTDLLARGIDVQQVSLVINYDLPANKENYIHRIGRGGRFGRKGVAINFVTNEDVGAMRELEKFYSTQIEELPSDIATLLN.

Ser2 bears the N-acetylserine mark. The short motif at 22 to 50 (YKFDDMELDENLLRGVFGYGFEEPSAIQQ) is the Q motif element. Residues 53–222 (IMPIIEGHDV…TKFMRNPVRI (170 aa)) enclose the Helicase ATP-binding domain. ATP is bound at residue 66 to 73 (AQSGTGKT). Thr73 is modified (phosphothreonine). Ser77 and Ser129 each carry phosphoserine. Phosphothreonine is present on Thr146. The DEAD box signature appears at 170-173 (DEAD). The region spanning 233 to 394 (GIKQFYVNVE…ELPSDIATLL (162 aa)) is the Helicase C-terminal domain.

This sequence belongs to the DEAD box helicase family. eIF4A subfamily. As to quaternary structure, component of the eIF4F complex, which composition varies with external and internal environmental conditions. It is composed of at least eIF4A, eIF4E and eIF4G.

Its subcellular location is the cytoplasm. It carries out the reaction ATP + H2O = ADP + phosphate + H(+). ATP-dependent RNA helicase which is a subunit of the eIF4F complex involved in cap recognition and is required for mRNA binding to ribosome. In the current model of translation initiation, eIF4A unwinds RNA secondary structures in the 5'-UTR of mRNAs which is necessary to allow efficient binding of the small ribosomal subunit, and subsequent scanning for the initiator codon. The polypeptide is ATP-dependent RNA helicase eIF4A (TIF1) (Saccharomyces cerevisiae (strain YJM789) (Baker's yeast)).